The chain runs to 501 residues: Pyruvate kinase 1 (501 aa).

Arginine 50 serves as a coordination point for substrate. Residues asparagine 52, serine 54, aspartate 85, and threonine 86 each contribute to the K(+) site. 52-55 contacts ATP; sequence NFSH. Arginine 92 and lysine 178 together coordinate ATP. Glutamate 243 provides a ligand contact to Mg(2+). The substrate site is built by glycine 266, aspartate 267, and threonine 299. Aspartate 267 is a binding site for Mg(2+).

It belongs to the pyruvate kinase family. Homotetramer. Requires Mg(2+) as cofactor. K(+) serves as cofactor.

The catalysed reaction is pyruvate + ATP = phosphoenolpyruvate + ADP + H(+). The protein operates within carbohydrate degradation; glycolysis; pyruvate from D-glyceraldehyde 3-phosphate: step 5/5. The sequence is that of Pyruvate kinase 1 (PYK1) from Candida glabrata (strain ATCC 2001 / BCRC 20586 / JCM 3761 / NBRC 0622 / NRRL Y-65 / CBS 138) (Yeast).